Here is a 526-residue protein sequence, read N- to C-terminus: Peptide chain release factor 3 (526 aa).

In terms of domain architecture, tr-type G spans 8 to 277 (SKRRTFAIIS…GLTRWAPAPQ (270 aa)). GTP-binding positions include 17–24 (SHPDAGKT), 85–89 (DTPGH), and 139–142 (NKLD).

Belongs to the TRAFAC class translation factor GTPase superfamily. Classic translation factor GTPase family. PrfC subfamily.

The protein resides in the cytoplasm. Its function is as follows. Increases the formation of ribosomal termination complexes and stimulates activities of RF-1 and RF-2. It binds guanine nucleotides and has strong preference for UGA stop codons. It may interact directly with the ribosome. The stimulation of RF-1 and RF-2 is significantly reduced by GTP and GDP, but not by GMP. The polypeptide is Peptide chain release factor 3 (Vibrio atlanticus (strain LGP32) (Vibrio splendidus (strain Mel32))).